A 345-amino-acid polypeptide reads, in one-letter code: Transcription factor MYB106 (345 aa).

HTH myb-type domains are found at residues 9-61 (KAGL…TNYL) and 62-116 (RPDI…KKRL). 2 consecutive DNA-binding regions (H-T-H motif) follow at residues 37–61 (WRSLPEKAGLQRCGKSCRLRWTNYL) and 89–112 (WSAIATHLPKRTDNEIKNYWNTHL).

Expressed in trichomes, stems, carpels, petals and stamens.

Its subcellular location is the nucleus. In terms of biological role, functions as a repressor of epidermal cell outgrowth and negatively regulate trichome branch formation. Acts both as a positive and a negative regulator of cellular outgrowth. Promotes both trichome expansion and branch formation. Coordinately with WIN1/SHN1, participates in the regulation of cuticle biosynthesis and wax accumulation in reproductive organs and trichomes. Functions in cuticle nanoridge formation in petals and stamens, and in morphogenesis of petal conical cells and trichomes. May play a role in the regulation of cuticle formation in vegetative organs. This Arabidopsis thaliana (Mouse-ear cress) protein is Transcription factor MYB106.